Reading from the N-terminus, the 2778-residue chain is Probable ubiquitin carboxyl-terminal hydrolase FAF (2778 aa).

A disordered region spans residues 1-85; that stretch reads MTFDTRRHTT…SQSSDDVAAS (85 aa). Residues 10 to 39 show a composition bias toward low complexity; sequence TGQPGSTAPSSSSSTTSTTTTTTSPAQSAG. Positions 71–85 are enriched in polar residues; that stretch reads QPATDSQSSDDVAAS. A Phosphoserine modification is found at serine 924. Positions 1065 to 1094 are disordered; sequence GTGLASSPDSSSDSSTGSPPRPCPDMQRVE. The segment covering 1070–1082 has biased composition (low complexity); that stretch reads SSPDSSSDSSTGS. Positions 1668–2062 constitute a USP domain; it reads CGLKNAGATC…NAYMLFYTRC (395 aa). Cysteine 1677 (nucleophile) is an active-site residue. Catalysis depends on histidine 1986, which acts as the Proton acceptor. Disordered stretches follow at residues 2568-2632 and 2644-2691; these read VSEK…GDSN and AYTS…INGL. Composition is skewed to low complexity over residues 2614-2627 and 2644-2671; these read TPTT…AWPA and AYTS…GSGA. A compositionally biased stretch (polar residues) spans 2672-2691; sequence NSETESSAQETTGETTINGL.

Belongs to the peptidase C19 family. In terms of assembly, interacts with imd. Post-translationally, ubiquitinated. Ubiquitination is enhanced by the expression of imd. Eye disks and ovaries. Expressed in larval fat body.

The enzyme catalyses Thiol-dependent hydrolysis of ester, thioester, amide, peptide and isopeptide bonds formed by the C-terminal Gly of ubiquitin (a 76-residue protein attached to proteins as an intracellular targeting signal).. Ubiquitin C-terminal hydrolase involved in development and the imd/NF-kappa-B (IMD) signaling cascade. Required for eye and embryo development, and plays a role in compound eye assembly and oogenesis respectively. In the larval eye disks, cells outside the assembling facets require this protein for short-range cell interactions that prevent the mystery cells from becoming photoreceptors. Also required for nuclear migration and cellularization in early embryogenesis and could play a role in pole cell determination, development or function. Regulates the IMD signaling cascade at later stages of infection (around 6 hours post-infection) by inhibiting the expression of the antimicrobial peptides Dpt and Dro. Acts by modulating the state of imd polyubiquitination and/or stability; a function which appears to be independent of its enzymatic activity. In turn, imd enhances the polyubiquitination and stability of faf suggesting that they may form a regulatory feedback mechanism within the Imd pathway. The sequence is that of Probable ubiquitin carboxyl-terminal hydrolase FAF (faf) from Drosophila melanogaster (Fruit fly).